Reading from the N-terminus, the 369-residue chain is Glutamate 5-kinase (369 aa).

Lysine 11 provides a ligand contact to ATP. Residues serine 51, aspartate 138, and asparagine 150 each contribute to the substrate site. Residues 170-171 and 212-218 contribute to the ATP site; these read TD and TGGMATK. In terms of domain architecture, PUA spans 277 to 355; the sequence is NGTIVIDDGA…QDIYAVLGYE (79 aa).

The protein belongs to the glutamate 5-kinase family.

Its subcellular location is the cytoplasm. It catalyses the reaction L-glutamate + ATP = L-glutamyl 5-phosphate + ADP. The protein operates within amino-acid biosynthesis; L-proline biosynthesis; L-glutamate 5-semialdehyde from L-glutamate: step 1/2. Its function is as follows. Catalyzes the transfer of a phosphate group to glutamate to form L-glutamate 5-phosphate. This Aliivibrio salmonicida (strain LFI1238) (Vibrio salmonicida (strain LFI1238)) protein is Glutamate 5-kinase.